The following is a 180-amino-acid chain: Inorganic pyrophosphatase (180 aa).

Substrate contacts are provided by Lys-30, Arg-44, and Tyr-56. Mg(2+) contacts are provided by Asp-66, Asp-71, and Asp-103. Tyr-142 is a binding site for substrate.

This sequence belongs to the PPase family. As to quaternary structure, homohexamer. The cofactor is Mg(2+).

Its subcellular location is the cytoplasm. It catalyses the reaction diphosphate + H2O = 2 phosphate + H(+). In terms of biological role, catalyzes the hydrolysis of inorganic pyrophosphate (PPi) forming two phosphate ions. The chain is Inorganic pyrophosphatase from Buchnera aphidicola subsp. Schizaphis graminum (strain Sg).